A 76-amino-acid chain; its full sequence is Accessory gland-specific peptide 57Dc (76 aa).

Residues 1-20 (MHGTHFLILLLLCGVLGSNG) form the signal peptide.

CAMP-dependent phosphorylation. In terms of tissue distribution, lumen fluid of male accessory glands, becomes seminal fluid.

The protein resides in the secreted. Transferred from male to female during mating and may affect egglaying and behavior after mating. The protein is Accessory gland-specific peptide 57Dc (Mst57Dc) of Drosophila melanogaster (Fruit fly).